The chain runs to 523 residues: Dynein regulatory complex subunit 3 (523 aa).

5 LRR repeats span residues 44 to 65, 66 to 87, 88 to 109, 110 to 131, and 132 to 153; these read DVLSLQLDFRNILRIDNLWQFE, NLRKLQLDNNIIEKIEGLENLA, HLVWLDLSFNNIETIEGLDTLV, NLEDLSLFNNRISKIDSLDALV, and KLQVLSLGNNRIDNMMNIIYLR. One can recognise an LRRCT domain in the interval 166 to 204; the sequence is NPISEAEDYKMFICAYLPDLMYLDYRRIDDHTKKLAEAK. 2 coiled-coil regions span residues 208–242 and 366–391; these read SIDELKHQENLMQAQLEDEQAQREELEKHKTAFVE and MTLEMQLVEQLEETINMFERNIVDMV.

This sequence belongs to the DRC3 family. In terms of assembly, component of the nexin-dynein regulatory complex (N-DRC). Interacts with DRC1. Interacts with TCTE1/DRC5. Interacts with DRC7.

It is found in the cytoplasm. Its subcellular location is the cytoskeleton. It localises to the cilium axoneme. The protein resides in the cell projection. The protein localises to the cilium. It is found in the flagellum axoneme. Its subcellular location is the flagellum. In terms of biological role, component of the nexin-dynein regulatory complex (N-DRC) a key regulator of ciliary/flagellar motility which maintains the alignment and integrity of the distal axoneme and regulates microtubule sliding in motile axonemes. This Homo sapiens (Human) protein is Dynein regulatory complex subunit 3 (DRC3).